Reading from the N-terminus, the 138-residue chain is ATP synthase epsilon chain (138 aa).

The protein belongs to the ATPase epsilon chain family. F-type ATPases have 2 components, CF(1) - the catalytic core - and CF(0) - the membrane proton channel. CF(1) has five subunits: alpha(3), beta(3), gamma(1), delta(1), epsilon(1). CF(0) has three main subunits: a, b and c.

It localises to the cell membrane. Functionally, produces ATP from ADP in the presence of a proton gradient across the membrane. This Buchnera aphidicola subsp. Schizaphis graminum (strain Sg) protein is ATP synthase epsilon chain (atpC).